A 98-amino-acid chain; its full sequence is NADH-ubiquinone oxidoreductase chain 4L (98 aa).

3 helical membrane-spanning segments follow: residues 1–21, 28–48, and 61–81; these read MASI…GVLI, STLL…TLLI, and LILL…LVTI.

The protein belongs to the complex I subunit 4L family. In terms of assembly, core subunit of respiratory chain NADH dehydrogenase (Complex I) which is composed of 45 different subunits.

The protein resides in the mitochondrion inner membrane. It catalyses the reaction a ubiquinone + NADH + 5 H(+)(in) = a ubiquinol + NAD(+) + 4 H(+)(out). Core subunit of the mitochondrial membrane respiratory chain NADH dehydrogenase (Complex I) which catalyzes electron transfer from NADH through the respiratory chain, using ubiquinone as an electron acceptor. Part of the enzyme membrane arm which is embedded in the lipid bilayer and involved in proton translocation. The sequence is that of NADH-ubiquinone oxidoreductase chain 4L (MT-ND4L) from Thylamys elegans (Elegant fat-tailed mouse opossum).